Here is a 719-residue protein sequence, read N- to C-terminus: Lanosterol synthase (719 aa).

A PFTB 1 repeat occupies 118 to 160 (RIEVIRYLVNHANPEDGGWGIHIEGKSTVFGTALNYVVLRILG). Asp-451 acts as the Proton donor in catalysis. 3 PFTB repeats span residues 478–523 (LKDS…MIEH), 555–595 (VKNA…SCVK), and 604–645 (SRRA…VVQT).

This sequence belongs to the terpene cyclase/mutase family.

The enzyme catalyses (S)-2,3-epoxysqualene = lanosterol. It participates in terpene metabolism; lanosterol biosynthesis; lanosterol from farnesyl diphosphate: step 3/3. Catalyzes the cyclization of (S)-2,3 oxidosqualene to lanosterol, a reaction that forms the sterol nucleus. This chain is Lanosterol synthase (ERG7), found in Pneumocystis carinii.